A 137-amino-acid polypeptide reads, in one-letter code: Large ribosomal subunit protein uL14 (137 aa).

The protein belongs to the universal ribosomal protein uL14 family. In terms of assembly, part of the 50S ribosomal subunit. Forms a cluster with proteins L3 and L24e, part of which may contact the 16S rRNA in 2 intersubunit bridges.

Its function is as follows. Binds to 23S rRNA. Forms part of two intersubunit bridges in the 70S ribosome. This is Large ribosomal subunit protein uL14 from Ignicoccus hospitalis (strain KIN4/I / DSM 18386 / JCM 14125).